Consider the following 218-residue polypeptide: Small ribosomal subunit protein uS3c (218 aa).

One can recognise a KH type-2 domain in the interval 47–118; the sequence is VQKNMKTSSG…KLNIAITRIE (72 aa).

Belongs to the universal ribosomal protein uS3 family. As to quaternary structure, part of the 30S ribosomal subunit.

Its subcellular location is the plastid. It is found in the chloroplast. The protein is Small ribosomal subunit protein uS3c (rps3) of Lactuca sativa (Garden lettuce).